The chain runs to 1205 residues: Transcriptional-regulating factor 1 (1205 aa).

6 disordered regions span residues 201–226 (YQQVPQQPHPGFTGGLPKPALPVGQH), 270–317 (YPQP…QRQS), 332–351 (QHLQEQQQPSMHLQPPSYHR), 390–500 (PQSH…QTKG), 527–583 (LNGH…PEAE), and 601–629 (PKPSSQGFTNSVAATPAARDKPASSMSDD). 2 stretches are compositionally biased toward low complexity: residues 291 to 317 (QQQQQPQQIRPSPPQQQQQLQLQQRQS) and 332 to 342 (QHLQEQQQPSM). 3 stretches are compositionally biased toward polar residues: residues 406–417 (KTYSSDRQTPAM), 437–447 (SEMTRVTSTLP), and 487–498 (QSGSPESSSGQT). S490 carries the phosphoserine modification. The segment at 512–534 (LTCSICLKEFKSLPALNGHMRSH) adopts a C2H2-type 1 zinc-finger fold. The segment covering 551–579 (APPPQPQPQPQPQQPLPPPPPPPPPPQLP) has biased composition (pro residues). The span at 604 to 613 (SSQGFTNSVA) shows a compositional bias: polar residues. N6-acetyllysine occurs at positions 639 and 646. Phosphothreonine is present on T773. An ELM2 domain is found at 785-876 (PRINIGLRFQ…ATLEMLLLRK (92 aa)). The SANT domain maps to 891–942 (AGSDKWTSLERKLFNKALATYSKDFIFVQKMVKSKTVAQCVEYYYTWKKIMR). Positions 956 to 975 (DDCMTSEEEEEAEEEEEDPE) are enriched in acidic residues. Disordered stretches follow at residues 956–1016 (DDCM…QQPS) and 1043–1087 (HGGT…GETD). T960 is modified (phosphothreonine). S961 carries the post-translational modification Phosphoserine. Residues 976 to 990 (EDRKSIKEEESEVAK) are compositionally biased toward basic and acidic residues. The C2H2-type 2 zinc finger occupies 1019–1043 (FICEMPNCGAVFSSRQALNGHARIH). Positions 1072–1086 (SVKSSPSHSTTSGET) are enriched in low complexity. Residues 1092 to 1114 (FPCKECGKVFFKIKSRNAHMKTH) form a C2H2-type 3 zinc finger.

In terms of assembly, interacts with CREBBP and EP300. Interacts with DNTTIP1 and DNTT. Highly expressed in kidney, lung and brain. In the brain, expression was seen in the basal ganglia, hippocampus, piriform cortex, cerebral cortex, ventromedial nucleus of the hypothalamus and the dorsal and superior central nuclei of the raphe.

It localises to the nucleus. In terms of biological role, binds DNA and activates transcription of CYP11A1. Interaction with CREBBP and EP300 results in a synergistic transcriptional activation of CYP11A1. The chain is Transcriptional-regulating factor 1 (Trerf1) from Mus musculus (Mouse).